Here is a 266-residue protein sequence, read N- to C-terminus: UPF0294 protein YafD (266 aa).

Belongs to the UPF0294 family.

The protein resides in the cytoplasm. The polypeptide is UPF0294 protein YafD (yafD) (Escherichia coli O157:H7).